We begin with the raw amino-acid sequence, 307 residues long: Ribosomal RNA small subunit methyltransferase H (307 aa).

Residues 32–34, Asp-52, Phe-78, Asp-99, and Gln-106 contribute to the S-adenosyl-L-methionine site; that span reads GGH.

It belongs to the methyltransferase superfamily. RsmH family.

It localises to the cytoplasm. The catalysed reaction is cytidine(1402) in 16S rRNA + S-adenosyl-L-methionine = N(4)-methylcytidine(1402) in 16S rRNA + S-adenosyl-L-homocysteine + H(+). In terms of biological role, specifically methylates the N4 position of cytidine in position 1402 (C1402) of 16S rRNA. In Caldicellulosiruptor saccharolyticus (strain ATCC 43494 / DSM 8903 / Tp8T 6331), this protein is Ribosomal RNA small subunit methyltransferase H.